The following is a 397-amino-acid chain: Enoyl-[acyl-carrier-protein] reductase [NADH] (397 aa).

Residues 48 to 53, 74 to 75, 111 to 112, and 139 to 140 contribute to the NAD(+) site; these read GASTGY, LE, DA, and LA. Position 225 (Y225) interacts with substrate. Y235 functions as the Proton donor in the catalytic mechanism. Residues K244 and 273 to 275 contribute to the NAD(+) site; that span reads VVT.

The protein belongs to the TER reductase family. In terms of assembly, monomer.

The enzyme catalyses a 2,3-saturated acyl-[ACP] + NAD(+) = a (2E)-enoyl-[ACP] + NADH + H(+). It functions in the pathway lipid metabolism; fatty acid biosynthesis. Functionally, involved in the final reduction of the elongation cycle of fatty acid synthesis (FAS II). Catalyzes the reduction of a carbon-carbon double bond in an enoyl moiety that is covalently linked to an acyl carrier protein (ACP). The polypeptide is Enoyl-[acyl-carrier-protein] reductase [NADH] (Tolumonas auensis (strain DSM 9187 / NBRC 110442 / TA 4)).